An 89-amino-acid chain; its full sequence is RNA-binding protein Hfq (89 aa).

The 60-residue stretch at 14–73 (DPYLNALRKEKINVAIYLVNGVKLQGRVDSFDQFVVLLRSNVTQMVYKHAISTIVPARDP) folds into the Sm domain.

It belongs to the Hfq family. Homohexamer.

Functionally, RNA chaperone that binds small regulatory RNA (sRNAs) and mRNAs to facilitate mRNA translational regulation in response to envelope stress, environmental stress and changes in metabolite concentrations. Also binds with high specificity to tRNAs. This Hydrogenovibrio crunogenus (strain DSM 25203 / XCL-2) (Thiomicrospira crunogena) protein is RNA-binding protein Hfq.